The following is a 245-amino-acid chain: 5'-nucleotidase SurE (245 aa).

The a divalent metal cation site is built by Asp8, Asp9, Ser39, and Asn97.

It belongs to the SurE nucleotidase family. A divalent metal cation is required as a cofactor.

The protein resides in the cytoplasm. It catalyses the reaction a ribonucleoside 5'-phosphate + H2O = a ribonucleoside + phosphate. Functionally, nucleotidase that shows phosphatase activity on nucleoside 5'-monophosphates. The protein is 5'-nucleotidase SurE of Clostridium kluyveri (strain NBRC 12016).